The chain runs to 522 residues: Probable protein kinase UbiB (522 aa).

The Protein kinase domain maps to 119 to 497 (SFERVPVASA…QRRTNRLLQS (379 aa)). ATP contacts are provided by residues 125-133 (VASASIAQV) and K151. D286 acts as the Proton acceptor in catalysis. A helical membrane pass occupies residues 496–516 (QSIIYGGMGFVLGLLALQFLI).

This sequence belongs to the ABC1 family. UbiB subfamily.

It is found in the cell inner membrane. It participates in cofactor biosynthesis; ubiquinone biosynthesis [regulation]. Functionally, is probably a protein kinase regulator of UbiI activity which is involved in aerobic coenzyme Q (ubiquinone) biosynthesis. The polypeptide is Probable protein kinase UbiB (Paracidovorax citrulli (strain AAC00-1) (Acidovorax citrulli)).